Here is a 905-residue protein sequence, read N- to C-terminus: Lateral signaling target protein 2 homolog (905 aa).

Residue Lys-87 forms a Glycyl lysine isopeptide (Lys-Gly) (interchain with G-Cter in ubiquitin) linkage. Ser-334 is subject to Phosphoserine. The segment at 354–441 is disordered; that stretch reads DEMSSLLSPP…RGQDGQSGEV (88 aa). 2 stretches are compositionally biased toward polar residues: residues 358–367 and 418–437; these read SLLSPPSACQ and PGNT…QDGQ. Thr-512 is subject to Phosphothreonine. 2 disordered regions span residues 516–552 and 589–691; these read NPKS…DNSH and PGSV…RGDV. Composition is skewed to basic and acidic residues over residues 542–552 and 605–615; these read PRAEGTGDNSH and GGDKEPERIDE. Residues 647-656 show a composition bias toward polar residues; sequence SGPQVDTASR. Positions 659-678 are enriched in basic and acidic residues; that stretch reads GEGEVKGQPEPEARKQDPEK. The FYVE-type zinc-finger motif lies at 835–895; it reads DEACGFCTSC…VCTHCYMFHV (61 aa). Zn(2+)-binding residues include Cys-841, Cys-844, Cys-857, Cys-860, Cys-865, Cys-868, and Cys-887. Thr-888 is modified (phosphothreonine; by MAP2K). Residue Cys-890 participates in Zn(2+) binding.

The protein belongs to the lst-2 family. Interacts with TRIM3. In terms of processing, monoubiquitination at Lys-87 prevents binding to phosphatidylinositol 3-phosphate (PI3P) and localization to early endosome membranes. In terms of tissue distribution, enriched in brain (at protein level).

The protein localises to the cytoplasm. Its subcellular location is the cytosol. It localises to the early endosome membrane. In terms of biological role, negative regulator of epidermal growth factor receptor (EGFR) signaling. Acts by promoting EGFR degradation in endosomes when not monoubiquitinated. In Mus musculus (Mouse), this protein is Lateral signaling target protein 2 homolog (Zfyve28).